The following is a 405-amino-acid chain: Opine dehydrogenase (405 aa).

Belongs to the lysopine/nopaline/octopine/opine/vitopine dehydrogenases family.

The polypeptide is Opine dehydrogenase (Haliotis discus hannai (Japanese abalone)).